Consider the following 556-residue polypeptide: Arginine--tRNA ligase (556 aa).

Residues 133–143 carry the 'HIGH' region motif; it reads ANPTGPIHIGH.

This sequence belongs to the class-I aminoacyl-tRNA synthetase family. Monomer.

The protein resides in the cytoplasm. It catalyses the reaction tRNA(Arg) + L-arginine + ATP = L-arginyl-tRNA(Arg) + AMP + diphosphate. The polypeptide is Arginine--tRNA ligase (Dehalococcoides mccartyi (strain ATCC BAA-2100 / JCM 16839 / KCTC 5957 / BAV1)).